The chain runs to 366 residues: tRNA (guanine(26)-N(2))-dimethyltransferase (366 aa).

The tract at residues 1–28 (MEVSEGSVTVEVPEERHGASEGSGEGVF) is disordered. The 365-residue stretch at 1–365 (MEVSEGSVTV…ADVADIRNAV (365 aa)) folds into the Trm1 methyltransferase domain. S-adenosyl-L-methionine is bound by residues Arg37, Arg64, and Asp79. Zn(2+) contacts are provided by Cys234, Cys237, Cys254, and Cys257.

The protein belongs to the class I-like SAM-binding methyltransferase superfamily. Trm1 family.

It carries out the reaction guanosine(26) in tRNA + 2 S-adenosyl-L-methionine = N(2)-dimethylguanosine(26) in tRNA + 2 S-adenosyl-L-homocysteine + 2 H(+). Dimethylates a single guanine residue at position 26 of a number of tRNAs using S-adenosyl-L-methionine as donor of the methyl groups. This chain is tRNA (guanine(26)-N(2))-dimethyltransferase, found in Natronomonas pharaonis (strain ATCC 35678 / DSM 2160 / CIP 103997 / JCM 8858 / NBRC 14720 / NCIMB 2260 / Gabara) (Halobacterium pharaonis).